Reading from the N-terminus, the 154-residue chain is NADPH-dependent 7-cyano-7-deazaguanine reductase (154 aa).

The active-site Thioimide intermediate is C52. Catalysis depends on D59, which acts as the Proton donor. Residues 74 to 76 (VES) and 93 to 94 (HE) contribute to the substrate site.

Belongs to the GTP cyclohydrolase I family. QueF type 1 subfamily.

Its subcellular location is the cytoplasm. The enzyme catalyses 7-aminomethyl-7-carbaguanine + 2 NADP(+) = 7-cyano-7-deazaguanine + 2 NADPH + 3 H(+). It participates in tRNA modification; tRNA-queuosine biosynthesis. In terms of biological role, catalyzes the NADPH-dependent reduction of 7-cyano-7-deazaguanine (preQ0) to 7-aminomethyl-7-deazaguanine (preQ1). This chain is NADPH-dependent 7-cyano-7-deazaguanine reductase, found in Paracoccus denitrificans (strain Pd 1222).